A 157-amino-acid chain; its full sequence is Large ribosomal subunit protein uL15 (157 aa).

Positions 1 to 13 are enriched in basic and acidic residues; it reads MKLNDLRDKDGAT. The segment at 1–39 is disordered; it reads MKLNDLRDKDGATHSKKRLGRGIGSGSGKTAGRGVKGQK. Over residues 21-35 the composition is skewed to gly residues; that stretch reads RGIGSGSGKTAGRGV.

Belongs to the universal ribosomal protein uL15 family. Part of the 50S ribosomal subunit.

Binds to the 23S rRNA. The sequence is that of Large ribosomal subunit protein uL15 from Mesorhizobium japonicum (strain LMG 29417 / CECT 9101 / MAFF 303099) (Mesorhizobium loti (strain MAFF 303099)).